A 234-amino-acid chain; its full sequence is DNA repair protein RecO (234 aa).

The protein belongs to the RecO family.

Its function is as follows. Involved in DNA repair and RecF pathway recombination. The chain is DNA repair protein RecO from Coxiella burnetii (strain RSA 331 / Henzerling II).